Consider the following 380-residue polypeptide: Chaperone protein DnaJ (380 aa).

Residues 6–71 (DYYESLEVSR…QKRAAYDRYG (66 aa)) enclose the J domain. The CR-type zinc-finger motif lies at 136 to 215 (GVTKDVEVRT…CHGTGTEAKT (80 aa)). Residues C149, C152, C167, C170, C189, C192, C203, and C206 each contribute to the Zn(2+) site. CXXCXGXG motif repeat units follow at residues 149–156 (CEACHGSG), 167–174 (CPTCHGAG), 189–196 (CPTCHGSG), and 203–210 (CKVCHGTG).

This sequence belongs to the DnaJ family. In terms of assembly, homodimer. It depends on Zn(2+) as a cofactor.

It localises to the cytoplasm. Its function is as follows. Participates actively in the response to hyperosmotic and heat shock by preventing the aggregation of stress-denatured proteins and by disaggregating proteins, also in an autonomous, DnaK-independent fashion. Unfolded proteins bind initially to DnaJ; upon interaction with the DnaJ-bound protein, DnaK hydrolyzes its bound ATP, resulting in the formation of a stable complex. GrpE releases ADP from DnaK; ATP binding to DnaK triggers the release of the substrate protein, thus completing the reaction cycle. Several rounds of ATP-dependent interactions between DnaJ, DnaK and GrpE are required for fully efficient folding. Also involved, together with DnaK and GrpE, in the DNA replication of plasmids through activation of initiation proteins. This Gluconobacter oxydans (strain 621H) (Gluconobacter suboxydans) protein is Chaperone protein DnaJ.